The sequence spans 268 residues: GTP cyclohydrolase FolE2 (268 aa).

It belongs to the GTP cyclohydrolase IV family.

It catalyses the reaction GTP + H2O = 7,8-dihydroneopterin 3'-triphosphate + formate + H(+). It functions in the pathway cofactor biosynthesis; 7,8-dihydroneopterin triphosphate biosynthesis; 7,8-dihydroneopterin triphosphate from GTP: step 1/1. Converts GTP to 7,8-dihydroneopterin triphosphate. The chain is GTP cyclohydrolase FolE2 from Paraburkholderia xenovorans (strain LB400).